A 234-amino-acid polypeptide reads, in one-letter code: Venom allergen 3 (234 aa).

An N-terminal signal peptide occupies residues Met1–Ala22. 4 disulfide bridges follow: Cys26–Cys41, Cys31–Cys125, Cys52–Cys118, and Cys198–Cys216. Residues Val69 to Tyr218 form the SCP domain. Residues Ala80 to Pro99 form a disordered region.

The protein belongs to the CRISP family. As to expression, expressed by the venom gland.

The protein resides in the secreted. This is Venom allergen 3 from Solenopsis invicta (Red imported fire ant).